Here is a 236-residue protein sequence, read N- to C-terminus: Large ribosomal subunit protein uL3 (236 aa).

The span at 139–149 (SVSHRSHGSTG) shows a compositional bias: low complexity. A disordered region spans residues 139–165 (SVSHRSHGSTGQRQDPGKVFKGKKMAG). Residue glutamine 152 is modified to N5-methylglutamine.

The protein belongs to the universal ribosomal protein uL3 family. Part of the 50S ribosomal subunit. Forms a cluster with proteins L14 and L19. Methylated by PrmB.

One of the primary rRNA binding proteins, it binds directly near the 3'-end of the 23S rRNA, where it nucleates assembly of the 50S subunit. The chain is Large ribosomal subunit protein uL3 from Pelagibacter ubique (strain HTCC1062).